Here is a 451-residue protein sequence, read N- to C-terminus: Porin AaxA (451 aa).

Positions 1-27 (MASFHSSLLTALCTLCTYGILTMPAYG) are cleaved as a signal peptide.

It belongs to the OprB family.

The protein localises to the cell outer membrane. Facilitates L-arginine uptake, as part of the AaxABC system. The arginine uptake by the bacterium in the macrophage may be a virulence factor against the host innate immune response. The chain is Porin AaxA (aaxA) from Chlamydia caviae (strain ATCC VR-813 / DSM 19441 / 03DC25 / GPIC) (Chlamydophila caviae).